Reading from the N-terminus, the 380-residue chain is MLKRKKLLQGFLKFLPLIIPATIFVSCARRESNHLIFNISLDHDADASISKFFELYSNNLSKKLDKKVTVSFNIIDDSFTKISNIQTAKADFAFVNSQSIKDNGIEEFNLILQTQTDAFKEDTNLDYYSDGQLKSKAEKMTTLFSKTPYKDWEDTAQQWTGSRYNFLYETNKLINFYRGMILITGSEEEIKKIKEAWDQKKWSDFMNYGIGHGSSGSAGKFQLPDLLLRKHFGSSYPGLQNAINQNPDKFANVRGREIGRDNKIKIVFDDANSFAWTHNDKNATNHFYTPTENNGKGDSEKSNNKNNKVEILTYTDPMLYDIGIVSDTLSDRYQKAIAEVFVELAKTKQDIYGPSYGYNGYNLITDPNKEILDVIHKTYG.

Residues 1 to 26 form the signal peptide; sequence MLKRKKLLQGFLKFLPLIIPATIFVS. Cysteine 27 carries N-palmitoyl cysteine lipidation. A lipid anchor (S-diacylglycerol cysteine) is attached at cysteine 27. The segment at 285-304 is disordered; it reads NHFYTPTENNGKGDSEKSNN.

Its subcellular location is the cell membrane. Functionally, P37 is part of a high-affinity transport system. This chain is High affinity transport system protein p37 (p37), found in Mycoplasma pneumoniae (strain ATCC 29342 / M129 / Subtype 1) (Mycoplasmoides pneumoniae).